Reading from the N-terminus, the 95-residue chain is Acyl carrier protein AcpXL (95 aa).

The Carrier domain occupies 4–90 (TATFDKVADI…NLCAKIDELR (87 aa)). O-(pantetheine 4'-phosphoryl)serine is present on S39.

Post-translationally, 4'-phosphopantetheine is transferred from CoA to a specific serine of apo-ACP by AcpS. This modification is essential for activity because fatty acids are bound in thioester linkage to the sulfhydryl of the prosthetic group.

It localises to the cytoplasm. Its pathway is glycolipid biosynthesis; KDO(2)-lipid A biosynthesis. Functionally, carrier of the growing fatty acid chain in fatty acid biosynthesis. Is involved in the transfer of long hydroxylated fatty acids to lipid A. This is Acyl carrier protein AcpXL (acpXL) from Rhizobium meliloti (strain 1021) (Ensifer meliloti).